A 489-amino-acid polypeptide reads, in one-letter code: Protein K15 (489 aa).

The signal sequence occupies residues 1 to 26 (MKTLIFFWNLWLWALLVCFWCITLVC). A run of 11 helical transmembrane segments spans residues 29–49 (TNSIDTMASLLVMCILFVSAI), 63–83 (WPSSWHLGIIACIVLKLWNLS), 89–109 (TYACLITTAILSLVTAFLTLI), 121–141 (HGILFTSTFAVLMTNMLVHMS), 148–168 (WIFFPISFTLSLPFLYAFATV), 175–195 (LVSSVSFICAGLVMGYPVSCC), 200–220 (CTATAAGLSLSSIYLGFTGII), 237–257 (FLLLQGGVLTTQTLTTELLAI), 264–284 (IKGHEILLLVCLIFLWCLYVW), 296–316 (MLHLIAAWSHTGGCVQLVMLL), and 324–344 (ILTMIICISTLFSTLQGLLVF).

Interacts with host LYN; this interaction modulates B-cells signaling. Interacts with host ITSN2.

The protein resides in the host cell membrane. The protein localises to the host Golgi apparatus. Its subcellular location is the host trans-Golgi network. Plays a crucial role for reactivation of the virus from latency, early viral gene expression and virus production. Modulates host signaling pathways including activation of MAP kinases c-JUN-N-terminal kinase (JNK), ERK2, and NF-kappa-B resulting in the activation of AP-1 and NFAT-dependent gene expression in B-lymphocytes. When expressed in epithelial cells, induces the expression of several inflammatory and angiogenic genes. Also interferes with B-lymphocytes signaling through interaction with host LYN kinase. The polypeptide is Protein K15 (K15) (Human herpesvirus 8 type P (isolate GK18) (HHV-8)).